The following is a 715-amino-acid chain: ATP-dependent DNA helicase Hel308 (715 aa).

The Q motif motif lies at 1–29 (MKVEELRIDERIKEVLKKRGISELYPPQA). Residues Gln-28 and 46 to 53 (IPTASGKT) contribute to the ATP site. Residues 33 to 197 (TSGILKGENA…WLNAKLIKSD (165 aa)) form the Helicase ATP-binding domain. A DEAH box motif is present at residues 145–148 (DEIH). Residues 229–422 (LVYDAIKRSK…ILRGQILALI (194 aa)) form the Helicase C-terminal domain.

This sequence belongs to the helicase family. Hel308 subfamily. As to quaternary structure, monomer.

The enzyme catalyses Couples ATP hydrolysis with the unwinding of duplex DNA by translocating in the 3'-5' direction.. It catalyses the reaction ATP + H2O = ADP + phosphate + H(+). Its function is as follows. DNA-dependent ATPase and 3'-5' DNA helicase that may be involved in repair of stalled replication forks. In Pyrococcus horikoshii (strain ATCC 700860 / DSM 12428 / JCM 9974 / NBRC 100139 / OT-3), this protein is ATP-dependent DNA helicase Hel308.